The primary structure comprises 365 residues: Chorismate synthase (365 aa).

NADP(+)-binding residues include Arg-48 and Arg-54. Residues 131 to 133 (RSS), 243 to 244 (NA), Gly-288, 303 to 307 (KPTSS), and Arg-329 contribute to the FMN site.

The protein belongs to the chorismate synthase family. As to quaternary structure, homotetramer. FMNH2 serves as cofactor.

It catalyses the reaction 5-O-(1-carboxyvinyl)-3-phosphoshikimate = chorismate + phosphate. It participates in metabolic intermediate biosynthesis; chorismate biosynthesis; chorismate from D-erythrose 4-phosphate and phosphoenolpyruvate: step 7/7. In terms of biological role, catalyzes the anti-1,4-elimination of the C-3 phosphate and the C-6 proR hydrogen from 5-enolpyruvylshikimate-3-phosphate (EPSP) to yield chorismate, which is the branch point compound that serves as the starting substrate for the three terminal pathways of aromatic amino acid biosynthesis. This reaction introduces a second double bond into the aromatic ring system. This is Chorismate synthase from Sinorhizobium fredii (strain NBRC 101917 / NGR234).